The primary structure comprises 282 residues: Bis(5'-nucleosyl)-tetraphosphatase, symmetrical (282 aa).

It belongs to the Ap4A hydrolase family.

It catalyses the reaction P(1),P(4)-bis(5'-adenosyl) tetraphosphate + H2O = 2 ADP + 2 H(+). Its function is as follows. Hydrolyzes diadenosine 5',5'''-P1,P4-tetraphosphate to yield ADP. This is Bis(5'-nucleosyl)-tetraphosphatase, symmetrical from Escherichia coli O7:K1 (strain IAI39 / ExPEC).